An 83-amino-acid chain; its full sequence is Small ribosomal subunit protein bS16 (83 aa).

Belongs to the bacterial ribosomal protein bS16 family.

This is Small ribosomal subunit protein bS16 from Shewanella halifaxensis (strain HAW-EB4).